A 909-amino-acid polypeptide reads, in one-letter code: MITKLLTKVIGSRNDRTLRRLRKIVKEINNYEPTFEALSDEELKAKTVEFRERLEQGETLDKLLPEAFATVREASKRVYGMRHFDVQLIGGMVLNGGQIAEMRTGEGKTLTATLPAYLNALPGKGVHVVTVNDYLATRDAETNRPLFEFLGMTVGVNVPNMPPQAKKEAYQADILYGTNNEFGFDYLRDNMAFRNEDRVQRERFFAVVDEVDSILIDEARTPLIISGPAEDSSDLYTRINLLIPQLQKQDKEDSEEYRGDGHYTVDEKSKQVHLTETGQEFVEELMVKNGLMEEGDTLYSPTNISLLHHVNAALRAHVLFERNVDYIVNEDGEVVIVDEHTGRTMPGRRWSEGLHQAVEAKEGVKIQNENQTLASITFQNYFRLYEKLSGMTGTADTEAFEFQSIYGLETVVIPTNKPMIRNDMPDVVYRTEAEKFAAIIEDIKERVEKGQPSLVGTVSIEKSELLSNALKKAKIKHNVLNAKFHEREAEIVAEAGTPGAVTIATNMAGRGTDIVLGGSWQAKVEALQDPTKEQIDAIKAEWKQVHDQVLESGGLHIIGTERHESRRIDNQLRGRSGRQGDAGSSRFYLSMEDSLLRIFTSDRMASLIQSGMEEGEAIESKMLSRSIEKAQRKVEGRNFDIRKQLLEYDDVANDQRKVVYELRDELMSVDDISDMIEQNREDVITAIIDEYIPPQSLEDMWDVEGLQERLKADFDLDAPIKQWLEEDDKLYEEALREKITNLAVEVYKAKEEVVGAQVLRNFEKSVMLQTLDTLWKEHLAAMDHLRQGIHLRGYAQKNPKQEYKRESFELFEGLLEALKTDVITVLSRVRVQQQEEVERMEEQRRAQAEEAARRAQAQHAAAQNPLSEGEESEEGAHQPMVREERKVGRNEPCPCGSGKKYKQCHGKID.

ATP-binding positions include Q87, 105–109 (GEGKT), and D513. The segment at 834–909 (QEEVERMEEQ…KYKQCHGKID (76 aa)) is disordered. Residues 836-853 (EVERMEEQRRAQAEEAAR) are compositionally biased toward basic and acidic residues. Positions 854–863 (RAQAQHAAAQ) are enriched in low complexity. The segment covering 874–889 (EGAHQPMVREERKVGR) has biased composition (basic and acidic residues). Residues C893, C895, C904, and H905 each coordinate Zn(2+). Over residues 899-909 (KKYKQCHGKID) the composition is skewed to basic residues.

Belongs to the SecA family. As to quaternary structure, monomer and homodimer. Part of the essential Sec protein translocation apparatus which comprises SecA, SecYEG and auxiliary proteins SecDF-YajC and YidC. Zn(2+) is required as a cofactor.

It localises to the cell inner membrane. The protein resides in the cytoplasm. It catalyses the reaction ATP + H2O + cellular proteinSide 1 = ADP + phosphate + cellular proteinSide 2.. Part of the Sec protein translocase complex. Interacts with the SecYEG preprotein conducting channel. Has a central role in coupling the hydrolysis of ATP to the transfer of proteins into and across the cell membrane, serving both as a receptor for the preprotein-SecB complex and as an ATP-driven molecular motor driving the stepwise translocation of polypeptide chains across the membrane. This Vibrio campbellii (strain ATCC BAA-1116) protein is Protein translocase subunit SecA.